Here is a 404-residue protein sequence, read N- to C-terminus: Multidrug resistance protein MdtG (404 aa).

11 consecutive transmembrane segments (helical) span residues 19–39 (LGCF…PLYV), 56–76 (LVFS…GGLA), 90–110 (LGMA…QFLI), 113–133 (ALLG…ATQA), 144–164 (TLST…GLLA), 171–191 (PVFF…FFFI), 222–242 (LFVT…ILTL), 254–274 (IAFI…LSAP), 288–308 (ILIV…FVQT), 317–337 (FLLG…LVYN), and 376–396 (AVFC…WNSL).

This sequence belongs to the major facilitator superfamily. DHA1 family. MdtG (TC 2.A.1.2.20) subfamily.

It is found in the cell inner membrane. In Salmonella paratyphi A (strain ATCC 9150 / SARB42), this protein is Multidrug resistance protein MdtG.